The chain runs to 854 residues: Aryl hydrocarbon receptor (854 aa).

A propeptide spanning residues 1–9 (MSSGANITY) is cleaved from the precursor. Positions 1–38 (MSSGANITYASRKRRKPVQKTVKPIPAEGIKSNPSKRH) are disordered. 2 consecutive short sequence motifs (nuclear localization signal) follow at residues 12-15 (RKRR) and 36-41 (KRHRDR). The region spanning 26–79 (PAEGIKSNPSKRHRDRLNTELDRLASLLPFPQDVINKLDKLSVLRLSVSYLRAK) is the bHLH domain. The DNA-binding stretch occupies residues 37–65 (RHRDRLNTELDRLASLLPFPQDVINKLDK). Required for maintaining the overall integrity of the AHR:ARNT heterodimer and its transcriptional activity stretches follow at residues 49–81 (LASL…AKSF), 116–124 (LLQALNGFV), and 264–266 (FAI). A Nuclear export signal motif is present at residues 63-71 (LDKLSVLRL). The PAS 1 domain maps to 111–175 (QEGEFLLQAL…AEFQRQLHWA (65 aa)). Positions 270-340 (LQPPSILEIR…CAESHIRMIK (71 aa)) constitute a PAS 2 domain. Positions 346–387 (MTVFRLLAKHSRWRWVQSNARLIYRNGRPDYIIATQRPLTDE) constitute a PAC domain. The interval 425-452 (LPIRTKSNTSRKDWAPQSTPSKDSFHPS) is disordered. The segment covering 440–452 (PQSTPSKDSFHPS) has biased composition (polar residues).

In terms of assembly, homodimer. Heterodimer; efficient DNA binding requires dimerization with another bHLH protein. Interacts with ARNT; the heterodimer ARNT:AHR binds to core DNA sequence 5'-TGCGTG-3' within the dioxin response element (DRE) of target gene promoters and activates their transcription. Binds MYBBP1A. Interacts with coactivators including SRC-1, RIP140 and NOCA7, and with the corepressor SMRT. Interacts with NEDD8 and IVNS1ABP. Interacts with BMAL1. Interacts with HSP90AB1. Interacts with TIPARP; leading to mono-ADP-ribosylation of AHR and subsequent inhibition of AHR. In terms of processing, mono-ADP-ribosylated, leading to inhibit transcription activator activity of AHR.

The protein resides in the cytoplasm. The protein localises to the nucleus. In terms of biological role, ligand-activated transcription factor that enables cells to adapt to changing conditions by sensing compounds from the environment, diet, microbiome and cellular metabolism, and which plays important roles in development, immunity and cancer. Upon ligand binding, translocates into the nucleus, where it heterodimerizes with ARNT and induces transcription by binding to xenobiotic response elements (XRE). Regulates a variety of biological processes, including angiogenesis, hematopoiesis, drug and lipid metabolism, cell motility and immune modulation. Xenobiotics can act as ligands: upon xenobiotic-binding, activates the expression of multiple phase I and II xenobiotic chemical metabolizing enzyme genes (such as the CYP1A1 gene). Mediates biochemical and toxic effects of halogenated aromatic hydrocarbons. Next to xenobiotics, natural ligands derived from plants, microbiota, and endogenous metabolism are potent AHR agonists. Tryptophan (Trp) derivatives constitute an important class of endogenous AHR ligands. Acts as a negative regulator of anti-tumor immunity: indoles and kynurenic acid generated by Trp catabolism act as ligand and activate AHR, thereby promoting AHR-driven cancer cell motility and suppressing adaptive immunity. Regulates the circadian clock by inhibiting the basal and circadian expression of the core circadian component PER1. Inhibits PER1 by repressing the CLOCK-BMAL1 heterodimer mediated transcriptional activation of PER1. The heterodimer ARNT:AHR binds to core DNA sequence 5'-TGCGTG-3' within the dioxin response element (DRE) of target gene promoters and activates their transcription. The polypeptide is Aryl hydrocarbon receptor (Ahr) (Mus spretus (Western Mediterranean mouse)).